A 251-amino-acid chain; its full sequence is Triosephosphate isomerase (251 aa).

Residue 9-11 coordinates substrate; it reads NWK. H95 acts as the Electrophile in catalysis. Catalysis depends on E167, which acts as the Proton acceptor. Substrate is bound by residues G173, S213, and 234-235; that span reads GG.

Belongs to the triosephosphate isomerase family. As to quaternary structure, homodimer.

It localises to the cytoplasm. It catalyses the reaction D-glyceraldehyde 3-phosphate = dihydroxyacetone phosphate. It functions in the pathway carbohydrate biosynthesis; gluconeogenesis. The protein operates within carbohydrate degradation; glycolysis; D-glyceraldehyde 3-phosphate from glycerone phosphate: step 1/1. In terms of biological role, involved in the gluconeogenesis. Catalyzes stereospecifically the conversion of dihydroxyacetone phosphate (DHAP) to D-glyceraldehyde-3-phosphate (G3P). This is Triosephosphate isomerase from Citrifermentans bemidjiense (strain ATCC BAA-1014 / DSM 16622 / JCM 12645 / Bem) (Geobacter bemidjiensis).